The sequence spans 251 residues: Pyrroloquinoline-quinone synthase (251 aa).

The protein belongs to the PqqC family.

The enzyme catalyses 6-(2-amino-2-carboxyethyl)-7,8-dioxo-1,2,3,4,7,8-hexahydroquinoline-2,4-dicarboxylate + 3 O2 = pyrroloquinoline quinone + 2 H2O2 + 2 H2O + H(+). The protein operates within cofactor biosynthesis; pyrroloquinoline quinone biosynthesis. In terms of biological role, ring cyclization and eight-electron oxidation of 3a-(2-amino-2-carboxyethyl)-4,5-dioxo-4,5,6,7,8,9-hexahydroquinoline-7,9-dicarboxylic-acid to PQQ. This Pseudomonas savastanoi pv. phaseolicola (strain 1448A / Race 6) (Pseudomonas syringae pv. phaseolicola (strain 1448A / Race 6)) protein is Pyrroloquinoline-quinone synthase.